The chain runs to 46 residues: Cuticle protein 4.9 (46 aa).

In terms of biological role, component of the cuticle of migratory locust which contains more than 100 different structural proteins. The chain is Cuticle protein 4.9 from Locusta migratoria (Migratory locust).